The following is a 173-amino-acid chain: Large ribosomal subunit protein uL10 (173 aa).

Belongs to the universal ribosomal protein uL10 family. In terms of assembly, part of the ribosomal stalk of the 50S ribosomal subunit. The N-terminus interacts with L11 and the large rRNA to form the base of the stalk. The C-terminus forms an elongated spine to which L12 dimers bind in a sequential fashion forming a multimeric L10(L12)X complex.

Functionally, forms part of the ribosomal stalk, playing a central role in the interaction of the ribosome with GTP-bound translation factors. The protein is Large ribosomal subunit protein uL10 of Cupriavidus metallidurans (strain ATCC 43123 / DSM 2839 / NBRC 102507 / CH34) (Ralstonia metallidurans).